The chain runs to 137 residues: NADH-ubiquinone oxidoreductase chain 3 (137 aa).

The next 3 helical transmembrane spans lie at 6–26 (LFIL…LIFA), 57–77 (FFIF…TFPF), and 86–106 (IYGL…FVYE).

Belongs to the complex I subunit 3 family.

The protein localises to the mitochondrion membrane. The catalysed reaction is a ubiquinone + NADH + 5 H(+)(in) = a ubiquinol + NAD(+) + 4 H(+)(out). In terms of biological role, core subunit of the mitochondrial membrane respiratory chain NADH dehydrogenase (Complex I) that is believed to belong to the minimal assembly required for catalysis. Complex I functions in the transfer of electrons from NADH to the respiratory chain. The immediate electron acceptor for the enzyme is believed to be ubiquinone. The sequence is that of NADH-ubiquinone oxidoreductase chain 3 (ND3) from Podospora anserina (strain S / ATCC MYA-4624 / DSM 980 / FGSC 10383) (Pleurage anserina).